The primary structure comprises 1034 residues: Multidrug export protein AcrF (1034 aa).

Over 1–9 (MANFFIRRP) the chain is Cytoplasmic. A helical transmembrane segment spans residues 10–28 (IFAWVLAIILMMAGALAIL). Topologically, residues 29 to 339 (QLPVAQYPTI…TPFVQLSIHE (311 aa)) are periplasmic. A helical transmembrane segment spans residues 340 to 359 (VVKTLFEAIMLVFLVMYLFL). The Cytoplasmic segment spans residues 360 to 365 (QNMRAT). Residues 366 to 385 (LIPTIAVPVVLLGTFAILAA) form a helical membrane-spanning segment. At 386–391 (FGYSIN) the chain is on the periplasmic side. Residues 392-413 (TLTMFGMVLAIGLLVDDAIVVV) form a helical membrane-spanning segment. The Cytoplasmic portion of the chain corresponds to 414-441 (ENVERVMMEDKLPPKEATEKSMSQIQGA). Residues 442-460 (LVGIAMVLSAVFIPMAFFG) traverse the membrane as a helical segment. Residues 461 to 473 (GSTGAIYRQFSIT) are Periplasmic-facing. A helical transmembrane segment spans residues 474 to 496 (IVSAMALSVLVALILTPALCATL). Residues 497–537 (LKPVSAEHHENKGGFFGWFNTTFDHSVNHYTNSVGKILGST) are Cytoplasmic-facing. Residues 538-556 (GRYLLIYALIVAGMVVLFL) form a helical membrane-spanning segment. The Periplasmic portion of the chain corresponds to 557 to 871 (RLPSSFLPEE…SYQERLSGNQ (315 aa)). Residues 872-891 (APALVAISFVVVFLCLAALY) traverse the membrane as a helical segment. At 892–897 (ESWSIP) the chain is on the cytoplasmic side. The chain crosses the membrane as a helical span at residues 898–917 (VSVMLVVPLGIVGVLLAATL). The Periplasmic portion of the chain corresponds to 918-923 (FNQKND). Residues 924–945 (VYFMVGLLTTIGLSAKNAILIV) traverse the membrane as a helical segment. At 946–973 (EFAKDLMEKEGKGVVEATLMAVRMRLRP) the chain is on the cytoplasmic side. A helical membrane pass occupies residues 974-992 (ILMTSLAFILGVLPLAISN). The Periplasmic segment spans residues 993–1005 (GAGSGAQNAVGIG). A helical transmembrane segment spans residues 1006 to 1028 (VMGGMVSATLLAIFFVPVFFVVI). Residues 1029–1034 (RRCFKG) lie on the Cytoplasmic side of the membrane.

This sequence belongs to the resistance-nodulation-cell division (RND) (TC 2.A.6) family. In terms of assembly, part of the tripartite efflux system AcrEF-TolC, which is composed of an inner membrane transporter, AcrF, a periplasmic membrane fusion protein, AcrE, and an outer membrane component, TolC. The complex forms a large protein conduit and can translocate molecules across both the inner and outer membranes.

It is found in the cell inner membrane. Part of the tripartite efflux system AcrEF-TolC. Involved in the efflux of indole and organic solvents. This chain is Multidrug export protein AcrF (acrF), found in Escherichia coli (strain K12).